The primary structure comprises 118 residues: Ribonuclease P protein component (118 aa).

The protein belongs to the RnpA family. As to quaternary structure, consists of a catalytic RNA component (M1 or rnpB) and a protein subunit.

The enzyme catalyses Endonucleolytic cleavage of RNA, removing 5'-extranucleotides from tRNA precursor.. RNaseP catalyzes the removal of the 5'-leader sequence from pre-tRNA to produce the mature 5'-terminus. It can also cleave other RNA substrates such as 4.5S RNA. The protein component plays an auxiliary but essential role in vivo by binding to the 5'-leader sequence and broadening the substrate specificity of the ribozyme. The chain is Ribonuclease P protein component from Shewanella oneidensis (strain ATCC 700550 / JCM 31522 / CIP 106686 / LMG 19005 / NCIMB 14063 / MR-1).